The sequence spans 361 residues: Chorismate synthase (361 aa).

Residues Arg48 and Arg54 each contribute to the NADP(+) site. FMN contacts are provided by residues 125–127 (RSS), 238–239 (NA), Gly278, 293–297 (KPTSS), and Arg319.

The protein belongs to the chorismate synthase family. As to quaternary structure, homotetramer. It depends on FMNH2 as a cofactor.

It catalyses the reaction 5-O-(1-carboxyvinyl)-3-phosphoshikimate = chorismate + phosphate. It participates in metabolic intermediate biosynthesis; chorismate biosynthesis; chorismate from D-erythrose 4-phosphate and phosphoenolpyruvate: step 7/7. In terms of biological role, catalyzes the anti-1,4-elimination of the C-3 phosphate and the C-6 proR hydrogen from 5-enolpyruvylshikimate-3-phosphate (EPSP) to yield chorismate, which is the branch point compound that serves as the starting substrate for the three terminal pathways of aromatic amino acid biosynthesis. This reaction introduces a second double bond into the aromatic ring system. The protein is Chorismate synthase of Klebsiella pneumoniae subsp. pneumoniae (strain ATCC 700721 / MGH 78578).